The following is a 1352-amino-acid chain: DNA-directed RNA polymerase subunit beta (1352 aa).

The protein belongs to the RNA polymerase beta chain family. The RNAP catalytic core consists of 2 alpha, 1 beta, 1 beta' and 1 omega subunit. When a sigma factor is associated with the core the holoenzyme is formed, which can initiate transcription.

It catalyses the reaction RNA(n) + a ribonucleoside 5'-triphosphate = RNA(n+1) + diphosphate. In terms of biological role, DNA-dependent RNA polymerase catalyzes the transcription of DNA into RNA using the four ribonucleoside triphosphates as substrates. The chain is DNA-directed RNA polymerase subunit beta from Hydrogenovibrio crunogenus (strain DSM 25203 / XCL-2) (Thiomicrospira crunogena).